Here is a 129-residue protein sequence, read N- to C-terminus: Glycine cleavage system H protein (129 aa).

Residues 24–106 (LVRIGISAFA…HGEGWLLLVK (83 aa)) form the Lipoyl-binding domain. Lys65 bears the N6-lipoyllysine mark.

It belongs to the GcvH family. In terms of assembly, the glycine cleavage system is composed of four proteins: P, T, L and H. (R)-lipoate is required as a cofactor.

The glycine cleavage system catalyzes the degradation of glycine. The H protein shuttles the methylamine group of glycine from the P protein to the T protein. In Prochlorococcus marinus (strain SARG / CCMP1375 / SS120), this protein is Glycine cleavage system H protein.